The primary structure comprises 61 residues: Small ribosomal subunit protein uS14 (61 aa).

Zn(2+) is bound by residues cysteine 24, cysteine 27, cysteine 40, and cysteine 43.

This sequence belongs to the universal ribosomal protein uS14 family. Zinc-binding uS14 subfamily. Part of the 30S ribosomal subunit. Contacts proteins S3 and S10. It depends on Zn(2+) as a cofactor.

In terms of biological role, binds 16S rRNA, required for the assembly of 30S particles and may also be responsible for determining the conformation of the 16S rRNA at the A site. The polypeptide is Small ribosomal subunit protein uS14 (Campylobacter fetus subsp. fetus (strain 82-40)).